The following is a 251-amino-acid chain: Arginine and glutamate-rich protein 1-A (251 aa).

The segment covering 1-48 (MGRSRSRSSSRSKHSKHSRKRSRSKSKSKKRSRSKEPKRNRRSRSRSG) has biased composition (basic residues). A necessary and sufficient for RNA binding region spans residues 1 to 53 (MGRSRSRSSSRSKHSKHSRKRSRSKSKSKKRSRSKEPKRNRRSRSRSGSRRDR). 2 disordered regions span residues 1 to 92 (MGRS…ERQR) and 215 to 251 (RMKL…KATE). Basic and acidic residues-rich tracts occupy residues 49–63 (SRRD…RTDM), 71–92 (RNND…ERQR), and 215–231 (RMKL…EEQK). The tract at residues 54–251 (GGSPPDRTDM…RLSFSLKATE (198 aa)) is necessary and sufficient for transcriptional regulation.

It belongs to the ARGLU1 family.

It localises to the nucleus. The protein localises to the nucleus speckle. It is found in the chromosome. Its function is as follows. Dual function regulator of gene expression; regulator of transcription and modulator of alternative splicing. General coactivator of nuclear receptor-induced gene expression. The protein is Arginine and glutamate-rich protein 1-A (arglu1a) of Danio rerio (Zebrafish).